The chain runs to 156 residues: Ribosomal RNA large subunit methyltransferase H (156 aa).

S-adenosyl-L-methionine contacts are provided by residues L73, G104, and 123-128 (LSPLTL).

This sequence belongs to the RNA methyltransferase RlmH family. In terms of assembly, homodimer.

The protein localises to the cytoplasm. The enzyme catalyses pseudouridine(1915) in 23S rRNA + S-adenosyl-L-methionine = N(3)-methylpseudouridine(1915) in 23S rRNA + S-adenosyl-L-homocysteine + H(+). Functionally, specifically methylates the pseudouridine at position 1915 (m3Psi1915) in 23S rRNA. This is Ribosomal RNA large subunit methyltransferase H from Photorhabdus laumondii subsp. laumondii (strain DSM 15139 / CIP 105565 / TT01) (Photorhabdus luminescens subsp. laumondii).